Consider the following 624-residue polypeptide: Protein POLLEN DEFECTIVE IN GUIDANCE 1 (624 aa).

The segment at 20-63 (SFENDDTSIRRSSSDPITGNVASESPRDYGKRKRSKKKKKKVNQ) is disordered. Residues 33–42 (SDPITGNVAS) are compositionally biased toward polar residues. Positions 49–61 (GKRKRSKKKKKKV) are enriched in basic residues. Helical transmembrane passes span 263–283 (VLID…LTVM), 305–325 (ASEL…ILLG), 391–411 (FVSD…ILLA), 413–433 (AITL…LLVS), 545–565 (LTFV…PVYA), and 578–598 (LWMV…KVLI).

The protein belongs to the TAPT1 family. Interacts with CRT3, but not with CRT1 or CNX. As to expression, expressed in inflorescences, siliques, roots and shoots. Expressed in early embryo, endosperm, mature pollen and pollen tubes, synergide cells and weakly in antipodal cells.

The protein resides in the membrane. It is found in the endoplasmic reticulum lumen. Its function is as follows. Probable component of the calreticulin 3 (CRT3) complex, acting probably as a co-chaperone involved in protein retention in the endoplasmic reticulum lumen. Required for micropylar pollen tube guidance. Plays an essential role in cell plate orientation or positioning in early embryo patterning. This is Protein POLLEN DEFECTIVE IN GUIDANCE 1 (POD1) from Arabidopsis thaliana (Mouse-ear cress).